Consider the following 142-residue polypeptide: Large ribosomal subunit protein uL11 (142 aa).

It belongs to the universal ribosomal protein uL11 family. In terms of assembly, part of the ribosomal stalk of the 50S ribosomal subunit. Interacts with L10 and the large rRNA to form the base of the stalk. L10 forms an elongated spine to which L12 dimers bind in a sequential fashion forming a multimeric L10(L12)X complex. Post-translationally, one or more lysine residues are methylated.

In terms of biological role, forms part of the ribosomal stalk which helps the ribosome interact with GTP-bound translation factors. The sequence is that of Large ribosomal subunit protein uL11 from Leptospira borgpetersenii serovar Hardjo-bovis (strain JB197).